The primary structure comprises 177 residues: ATP synthase subunit delta (177 aa).

Belongs to the ATPase delta chain family. In terms of assembly, F-type ATPases have 2 components, F(1) - the catalytic core - and F(0) - the membrane proton channel. F(1) has five subunits: alpha(3), beta(3), gamma(1), delta(1), epsilon(1). F(0) has three main subunits: a(1), b(2) and c(10-14). The alpha and beta chains form an alternating ring which encloses part of the gamma chain. F(1) is attached to F(0) by a central stalk formed by the gamma and epsilon chains, while a peripheral stalk is formed by the delta and b chains.

Its subcellular location is the cell inner membrane. Its function is as follows. F(1)F(0) ATP synthase produces ATP from ADP in the presence of a proton or sodium gradient. F-type ATPases consist of two structural domains, F(1) containing the extramembraneous catalytic core and F(0) containing the membrane proton channel, linked together by a central stalk and a peripheral stalk. During catalysis, ATP synthesis in the catalytic domain of F(1) is coupled via a rotary mechanism of the central stalk subunits to proton translocation. Functionally, this protein is part of the stalk that links CF(0) to CF(1). It either transmits conformational changes from CF(0) to CF(1) or is implicated in proton conduction. This is ATP synthase subunit delta from Shewanella pealeana (strain ATCC 700345 / ANG-SQ1).